The sequence spans 415 residues: Gamma-glutamyl phosphate reductase (415 aa).

The protein belongs to the gamma-glutamyl phosphate reductase family.

It localises to the cytoplasm. The enzyme catalyses L-glutamate 5-semialdehyde + phosphate + NADP(+) = L-glutamyl 5-phosphate + NADPH + H(+). Its pathway is amino-acid biosynthesis; L-proline biosynthesis; L-glutamate 5-semialdehyde from L-glutamate: step 2/2. In terms of biological role, catalyzes the NADPH-dependent reduction of L-glutamate 5-phosphate into L-glutamate 5-semialdehyde and phosphate. The product spontaneously undergoes cyclization to form 1-pyrroline-5-carboxylate. This chain is Gamma-glutamyl phosphate reductase, found in Bacillus cereus (strain ATCC 10987 / NRS 248).